Here is a 173-residue protein sequence, read N- to C-terminus: NADH-ubiquinone oxidoreductase chain 6 (173 aa).

5 consecutive transmembrane segments (helical) span residues 1–21 (MTYF…AVAS), 27–47 (YGVV…LSLG), 48–68 (ISFV…VVFV), 87–107 (VIGY…IGGF), and 139–159 (CGVG…FVVL).

It belongs to the complex I subunit 6 family.

It is found in the mitochondrion membrane. The catalysed reaction is a ubiquinone + NADH + 5 H(+)(in) = a ubiquinol + NAD(+) + 4 H(+)(out). In terms of biological role, core subunit of the mitochondrial membrane respiratory chain NADH dehydrogenase (Complex I) that is believed to belong to the minimal assembly required for catalysis. Complex I functions in the transfer of electrons from NADH to the respiratory chain. The immediate electron acceptor for the enzyme is believed to be ubiquinone. This chain is NADH-ubiquinone oxidoreductase chain 6 (MT-ND6), found in Alca torda (Razorbill).